A 163-amino-acid chain; its full sequence is MMGKYLWALVYVTVMILIIVVEVESSLHRVGGGRYTWNSDVNFSDWANHQRFYSGDWLYFGFNRTRHNILQVNKSSYEQCVDNDYIFNITRGGRDVFQLLEPKPYYFICGRGYCLKGMKLAITVLPQPPPSAPTNFTSTTTPLIPPNAITAAILIFAFKALLL.

The N-terminal stretch at 1-25 (MMGKYLWALVYVTVMILIIVVEVES) is a signal peptide. Residues 26–126 (SLHRVGGGRY…GMKLAITVLP (101 aa)) form the Phytocyanin domain. N-linked (GlcNAc...) asparagine glycosylation is found at asparagine 42, asparagine 63, asparagine 73, asparagine 88, and asparagine 135. A disulfide bridge connects residues cysteine 80 and cysteine 114. The GPI-anchor amidated serine moiety is linked to residue serine 138. Positions 139 to 163 (TTTPLIPPNAITAAILIFAFKALLL) are cleaved as a propeptide — removed in mature form.

This sequence belongs to the early nodulin-like (ENODL) family.

The protein localises to the cell membrane. May act as a carbohydrate transporter. The chain is Early nodulin-like protein 20 from Arabidopsis thaliana (Mouse-ear cress).